Reading from the N-terminus, the 601-residue chain is Serine/threonine-protein phosphatase 2A 65 kDa regulatory subunit A beta isoform (601 aa).

Ala2 carries the N-acetylalanine modification. 15 HEAT repeats span residues 20–58 (DSLYPIAVLIDELRNEDVQLRLNSIKKLSTIALALGVER), 59–96 (TRTELLPFLTDTIYDEDEVLLALAEQLGNFTGLVGGPD), 97–135 (FAHCLLPPLESLATVEETVVRDKAVESLRQISQEHTPVA), 136–173 (LEAHFVPLVKRLASGDWFTSRTSACGLFSVCYPRASNA), 174–212 (VKAEIRQHFRSLCSDDTPMVRRAAASKLGEFAKVLELDS), 213–251 (VKTEIVPLFTNLASDEQDSVRLLAVEACVSIAQLLSQED), 252–290 (LEALVMPTLRQAAEDKSWRVRYMVADKFSELQKAVGPKI), 291–333 (ALSD…RETV), 334–372 (IMNQILPYIKELVSDTNQHVKSALASVIMGLSTVLGKEN), 373–411 (TIEHLLPLFLAQLKDECPEVRLNIISNLDCVNEVIGIRQ), 412–450 (LSQSLLPAIVELAEDAKWRVRLAIIEYMPLLAGQLGVEF), 451–489 (FDEKLNSLCMAWLVDHVYAIREAATNNLMKLVQKFGTEW), 490–528 (AQNTIVPKVLVMANDPNYLHRMTTLFCINALSEACGKEI), 529–567 (TTKQMLPIVLKMAGDQVANVRFNVAKSLQKIGPILDTNA), and 568–601 (LQGEVKPVLQKLGQDEDMDVKYFAQEAISVLALA).

The protein belongs to the phosphatase 2A regulatory subunit A family. In terms of assembly, PP2A consists of a common heterodimeric core enzyme, composed of a 36 kDa catalytic subunit (subunit C) and a 65 kDa constant regulatory subunit (PR65 or subunit A), that associates with a variety of regulatory subunits. Proteins that associate with the core dimer include three families of regulatory subunits B (the R2/B/PR55/B55, R3/B''/PR72/PR130/PR59 and R5/B'/B56 families), the 48 kDa variable regulatory subunit, viral proteins, and cell signaling molecules. Interacts with IPO9. Interacts with SGO1. Interacts with RAF1.

The PR65 subunit of protein phosphatase 2A serves as a scaffolding molecule to coordinate the assembly of the catalytic subunit and a variable regulatory B subunit. The chain is Serine/threonine-protein phosphatase 2A 65 kDa regulatory subunit A beta isoform (Ppp2r1b) from Mus musculus (Mouse).